Consider the following 184-residue polypeptide: Non-fimbrial adhesin 1 (184 aa).

The N-terminal stretch at 1–28 (MKAKKYENQIYNENGRRCQRHGRRLAIA) is a signal peptide. The cysteines at positions 57 and 91 are disulfide-linked.

In terms of assembly, forms a polymeric structure, which disintegrates with elevated temperature into a monomer but with some relatively stable dimers.

In Escherichia coli, this protein is Non-fimbrial adhesin 1 (nfaA).